A 1385-amino-acid chain; its full sequence is Coiled-coil domain-containing protein 7 (1385 aa).

Residues 299 to 330 (LDAEYKQMQCDFQLLSEEKLVLENELQKLKDK) adopt a coiled-coil conformation. The segment at 329 to 364 (DKEKTKPTNNRTKKAVKTVKKKDKGKSEDSEKKMSP) is disordered. Basic residues predominate over residues 339–352 (RTKKAVKTVKKKDK). Positions 353-364 (GKSEDSEKKMSP) are enriched in basic and acidic residues. The stretch at 374–411 (LDQVQKVARLEIENKVLQEQLKQALQEAEKAKHQLNYF) forms a coiled coil. 3 disordered regions span residues 422–545 (GKTE…SKEV), 572–752 (TESK…EPNE), and 809–834 (TKKLPREKRHSTHDEESGENPMLKHQ). Polar residues predominate over residues 425–436 (ETTMQVGNSQTK). Basic and acidic residues-rich tracts occupy residues 437 to 455 (VKGEDSKNIPLEKETRKSL) and 481 to 490 (LIEKSSEKKR). Polar residues-rich tracts occupy residues 493 to 503 (PAISDLSQILK), 511 to 528 (LESSNEVSVAENQSYKSP), and 536 to 545 (LTTVSSSKEV). Residues 573 to 589 (ESKKADVSEEQLQKMTE) are compositionally biased toward basic and acidic residues. Polar residues predominate over residues 654 to 664 (RIQSETKNLKA). Basic and acidic residues-rich tracts occupy residues 665 to 676 (TRNESFHSHNDV) and 685 to 697 (QDTKSKTEVEVKK). A compositionally biased stretch (polar residues) spans 701 to 711 (FQDNQLSTHNE). Over residues 712–726 (VPNERLVVEHQESLS) the composition is skewed to basic and acidic residues.

Expressed in epithelium of normal cervix and cervical cancer. Overexpressed in early and interim cervical cancer.

May play a role in tumorigenesis. This Homo sapiens (Human) protein is Coiled-coil domain-containing protein 7 (CCDC7).